The sequence spans 339 residues: uncharacterized protein (339 aa).

This is an uncharacterized protein from Treponema pallidum (strain Nichols).